We begin with the raw amino-acid sequence, 464 residues long: GPI mannosyltransferase 2 (464 aa).

Topologically, residues 1–70 (MYYIGHPSYY…MTRSGYNYFK (70 aa)) are cytoplasmic. The helical transmembrane segment at 71-91 (GICVCTFLLSTILYLGIAVIM) threads the bilayer. The Lumenal portion of the chain corresponds to 92–166 (SHLCVFDDTA…ISFLAFRSKD (75 aa)). Asn108 and Asn139 each carry an N-linked (GlcNAc...) asparagine glycan. Residues 167–187 (VVLLGIVSCFASIFFHAIACY) form a helical membrane-spanning segment. Over 188–219 (ALYLLTKSIFSNQKMTAYTVIFYCFSPSGIYM) the chain is Cytoplasmic. The chain crosses the membrane as a helical span at residues 220 to 240 (SVGYTESLFAAFSFLGLLLFI). Residues 241-260 (KKQQYPAAFLWSLATLIRSN) lie on the Lumenal side of the membrane. A helical transmembrane segment spans residues 261–281 (GIFWCIFFGMPAIGTLKISLE). Residues 282 to 289 (RLQLTFMQ) are Cytoplasmic-facing. Residues 290–309 (VSQLVGYGTKCLIILVPFFY) traverse the membrane as a helical segment. Residues 310-356 (NQYLGFKLFCPGVAWCNKSLPLIYPAVQEKYWNVGFLRYWTLNNIPN) are Lumenal-facing. The N-linked (GlcNAc...) asparagine glycan is linked to Asn326. Residues 357–377 (FLFALLSIIPILFALFYSISG) form a helical membrane-spanning segment. Residues 378 to 388 (STLHSFRSIKS) are Cytoplasmic-facing. Residues 389-409 (HLVLSALYLYIGCFHMHTQVL) form a helical membrane-spanning segment. Topologically, residues 410–440 (NRMSSALPLLYWSMAHATLYAKSRNLKAFGH) are lumenal. A helical membrane pass occupies residues 441–461 (CILFVWIVYTVIQAGLYGSFL). At 462–464 (PPA) the chain is on the cytoplasmic side.

This sequence belongs to the PIGV family. In terms of assembly, part of the GPI mannosyltransferase 2 complex composed of gpi18 and C167.09.

The protein localises to the endoplasmic reticulum membrane. The protein operates within glycolipid biosynthesis; glycosylphosphatidylinositol-anchor biosynthesis. Its function is as follows. Mannosyltransferase involved in glycosylphosphatidylinositol-anchor biosynthesis. Responsible for the transfer of the second mannose to the glycosylphosphatidylinositol during GPI precursor assembly. In Schizosaccharomyces pombe (strain 972 / ATCC 24843) (Fission yeast), this protein is GPI mannosyltransferase 2 (gpi18).